We begin with the raw amino-acid sequence, 161 residues long: Phosphopantetheine adenylyltransferase (161 aa).

Thr11 lines the substrate pocket. ATP is bound by residues 11–12 (TF) and His19. Lys43, Thr75, and Arg89 together coordinate substrate. ATP contacts are provided by residues 90 to 92 (GLR), Glu100, and 125 to 131 (YSFLSSS).

Belongs to the bacterial CoaD family. Homohexamer. Mg(2+) serves as cofactor.

It is found in the cytoplasm. The catalysed reaction is (R)-4'-phosphopantetheine + ATP + H(+) = 3'-dephospho-CoA + diphosphate. Its pathway is cofactor biosynthesis; coenzyme A biosynthesis; CoA from (R)-pantothenate: step 4/5. In terms of biological role, reversibly transfers an adenylyl group from ATP to 4'-phosphopantetheine, yielding dephospho-CoA (dPCoA) and pyrophosphate. The protein is Phosphopantetheine adenylyltransferase of Listeria innocua serovar 6a (strain ATCC BAA-680 / CLIP 11262).